A 492-amino-acid polypeptide reads, in one-letter code: Probable ATP-citrate synthase subunit 2 (492 aa).

Phosphoserine is present on Ser24.

It in the N-terminal section; belongs to the succinate/malate CoA ligase beta subunit family. The protein in the C-terminal section; belongs to the succinate/malate CoA ligase alpha subunit family. In terms of assembly, composed of two subunits.

It localises to the cytoplasm. It is found in the nucleus. It carries out the reaction oxaloacetate + acetyl-CoA + ADP + phosphate = citrate + ATP + CoA. Functionally, ATP citrate-lyase is the primary enzyme responsible for the synthesis of cytosolic acetyl-CoA. Has a central role in de novo lipid synthesis. This Schizosaccharomyces pombe (strain 972 / ATCC 24843) (Fission yeast) protein is Probable ATP-citrate synthase subunit 2.